Consider the following 430-residue polypeptide: GTPase Obg (430 aa).

In terms of domain architecture, Obg spans 1–158 (MFVDQVKISL…LDVSLELKLL (158 aa)). A disordered region spans residues 118-145 (KGGRGGRGNSRFATPRNPAPDFSEKGEP). An OBG-type G domain is found at 159–329 (ADVGLVGFPS…LLYAIADKLE (171 aa)). Residues 165-172 (GFPSVGKS), 190-194 (FTTIK), 212-215 (DLPG), 282-285 (NKMD), and 310-312 (STI) each bind GTP. S172 and T192 together coordinate Mg(2+). Positions 352-430 (KHTPSQDKFT…ILGGEFEFVE (79 aa)) constitute an OCT domain.

It belongs to the TRAFAC class OBG-HflX-like GTPase superfamily. OBG GTPase family. In terms of assembly, monomer. It depends on Mg(2+) as a cofactor.

Its subcellular location is the cytoplasm. Functionally, an essential GTPase which binds GTP, GDP and possibly (p)ppGpp with moderate affinity, with high nucleotide exchange rates and a fairly low GTP hydrolysis rate. Plays a role in control of the cell cycle, stress response, ribosome biogenesis and in those bacteria that undergo differentiation, in morphogenesis control. This Staphylococcus aureus (strain Mu3 / ATCC 700698) protein is GTPase Obg.